The following is a 341-amino-acid chain: Coiled-coil domain-containing protein 86 (341 aa).

The interval 1-341 (MGTPLRRSRR…QPPQRPVAKV (341 aa)) is disordered. A Phosphoserine modification is found at Ser-18. Residues 26–49 (EVSRAKRALVDFKSNPEETRELES) are compositionally biased toward basic and acidic residues. Residue Ser-59 is modified to Phosphoserine. The span at 64–73 (PETSPESPCP) shows a compositional bias: low complexity. Position 66 is a phosphothreonine (Thr-66). A phosphoserine mark is found at Ser-67, Ser-70, Ser-81, Ser-92, Ser-103, Ser-114, and Ser-124. The span at 105–114 (AGQTESNPES) shows a compositional bias: polar residues. Residues 130 to 139 (EVAHAKEEVI) are compositionally biased toward basic and acidic residues. Phosphoserine occurs at positions 142, 169, 170, and 200. Residues 219–235 (GKPKSGRVWKDRSKKRF) are compositionally biased toward basic residues. Over residues 254–298 (ERQERKLAKDFARHLEEEKQRRRQEKKERRAENLRRRLENERKAE) the composition is skewed to basic and acidic residues. Residues 261–304 (AKDFARHLEEEKQRRRQEKKERRAENLRRRLENERKAEIVQVIR) are a coiled coil. The span at 307–317 (AKLKKAKKKQL) shows a compositional bias: basic residues. Position 323 is a citrulline (Arg-323).

Post-translationally, citrullinated by PADI4.

It localises to the nucleus. The protein localises to the chromosome. It is found in the nucleolus. In terms of biological role, required for proper chromosome segregation during mitosis and error-free mitotic progression. In Rattus norvegicus (Rat), this protein is Coiled-coil domain-containing protein 86.